The primary structure comprises 81 residues: RNA-binding protein Hfq (81 aa).

Positions 9-68 (DPFLNVLRRERVPVFIYLINGIKLQGEIESFDKFVILLRNTVNQMIYKHAISTIVPSRVV) constitute a Sm domain.

The protein belongs to the Hfq family. In terms of assembly, homohexamer.

RNA chaperone that binds small regulatory RNA (sRNAs) and mRNAs to facilitate mRNA translational regulation in response to envelope stress, environmental stress and changes in metabolite concentrations. Also binds with high specificity to tRNAs. The polypeptide is RNA-binding protein Hfq (Blochmanniella pennsylvanica (strain BPEN)).